Here is a 355-residue protein sequence, read N- to C-terminus: 3-isopropylmalate dehydrogenase (355 aa).

An NAD(+)-binding site is contributed by 77-90; that stretch reads GAKWDNLPREKRPE. Substrate-binding residues include R97, R107, R135, and D220. The Mg(2+) site is built by D220, D244, and D248. 277 to 289 contributes to the NAD(+) binding site; the sequence is GSAPDIAGQGIAN.

Belongs to the isocitrate and isopropylmalate dehydrogenases family. LeuB type 1 subfamily. As to quaternary structure, homodimer. It depends on Mg(2+) as a cofactor. Mn(2+) serves as cofactor.

It is found in the cytoplasm. The enzyme catalyses (2R,3S)-3-isopropylmalate + NAD(+) = 4-methyl-2-oxopentanoate + CO2 + NADH. Its pathway is amino-acid biosynthesis; L-leucine biosynthesis; L-leucine from 3-methyl-2-oxobutanoate: step 3/4. In terms of biological role, catalyzes the oxidation of 3-carboxy-2-hydroxy-4-methylpentanoate (3-isopropylmalate) to 3-carboxy-4-methyl-2-oxopentanoate. The product decarboxylates to 4-methyl-2 oxopentanoate. In Sulfurimonas denitrificans (strain ATCC 33889 / DSM 1251) (Thiomicrospira denitrificans (strain ATCC 33889 / DSM 1251)), this protein is 3-isopropylmalate dehydrogenase.